We begin with the raw amino-acid sequence, 394 residues long: Elongation factor Tu (394 aa).

One can recognise a tr-type G domain in the interval 10-204 (KPHVNIGTIG…AVDSYIPQPI (195 aa)). The tract at residues 19-26 (GHVDHGKT) is G1. 19–26 (GHVDHGKT) provides a ligand contact to GTP. Residue Thr-26 participates in Mg(2+) binding. The interval 60-64 (GITIS) is G2. Residues 81–84 (DCPG) form a G3 region. GTP contacts are provided by residues 81 to 85 (DCPGH) and 136 to 139 (NKVD). The interval 136-139 (NKVD) is G4. The G5 stretch occupies residues 174 to 176 (SAL).

The protein belongs to the TRAFAC class translation factor GTPase superfamily. Classic translation factor GTPase family. EF-Tu/EF-1A subfamily. Monomer.

It localises to the cytoplasm. It carries out the reaction GTP + H2O = GDP + phosphate + H(+). GTP hydrolase that promotes the GTP-dependent binding of aminoacyl-tRNA to the A-site of ribosomes during protein biosynthesis. The polypeptide is Elongation factor Tu (Rickettsia typhi (strain ATCC VR-144 / Wilmington)).